The following is a 68-amino-acid chain: MQIMVRDNNVDQALRALKKKLQREGVYREMKLRRHYEKPSEKRAREKAAAVRRARKMERKRMERDGIK.

Basic and acidic residues predominate over residues 37 to 49; it reads EKPSEKRAREKAA. Residues 37 to 68 form a disordered region; it reads EKPSEKRAREKAAAVRRARKMERKRMERDGIK. Basic residues predominate over residues 50–59; that stretch reads AVRRARKMER.

Belongs to the bacterial ribosomal protein bS21 family.

The polypeptide is Small ribosomal subunit protein bS21 (Erythrobacter litoralis (strain HTCC2594)).